The following is a 243-amino-acid chain: Adenosine 5'-phosphosulfate reductase (243 aa).

Belongs to the PAPS reductase family. CysH subfamily. It depends on [4Fe-4S] cluster as a cofactor.

It is found in the cytoplasm. It carries out the reaction [thioredoxin]-disulfide + sulfite + AMP + 2 H(+) = adenosine 5'-phosphosulfate + [thioredoxin]-dithiol. The protein operates within sulfur metabolism; hydrogen sulfide biosynthesis; sulfite from sulfate. Catalyzes the formation of sulfite from adenosine 5'-phosphosulfate (APS) using thioredoxin as an electron donor. This chain is Adenosine 5'-phosphosulfate reductase, found in Staphylococcus haemolyticus (strain JCSC1435).